A 462-amino-acid chain; its full sequence is Glycine--tRNA ligase (462 aa).

Substrate contacts are provided by Arg99 and Glu174. Residues Arg206 to Glu208, Phe216 to Phe221, Glu290 to Leu291, and Gly334 to Arg337 contribute to the ATP site. Residue Phe221–Glu225 coordinates substrate. Glu330–Gly334 lines the substrate pocket.

Belongs to the class-II aminoacyl-tRNA synthetase family. In terms of assembly, homodimer.

It localises to the cytoplasm. The enzyme catalyses tRNA(Gly) + glycine + ATP = glycyl-tRNA(Gly) + AMP + diphosphate. Functionally, catalyzes the attachment of glycine to tRNA(Gly). In Macrococcus caseolyticus (strain JCSC5402) (Macrococcoides caseolyticum), this protein is Glycine--tRNA ligase.